The chain runs to 218 residues: Glutathione S-transferase Mu 1 (218 aa).

Positions 2 to 88 (PMILGYWNVR…YLARKHHLDG (87 aa)) constitute a GST N-terminal domain. 7 to 8 (YW) provides a ligand contact to glutathione. Position 34 is a phosphothreonine (T34). Residues 43–46 (RSQW), K50, and 59–60 (NL) contribute to the glutathione site. S67 carries the post-translational modification Phosphoserine. A glutathione-binding site is contributed by 72-73 (QS). Residues 90 to 208 (TEEERIRADI…KSSRYIATPI (119 aa)) form the GST C-terminal domain. Y116 contributes to the substrate binding site. S210 bears the Phosphoserine mark.

As to quaternary structure, homodimer.

Its subcellular location is the cytoplasm. It catalyses the reaction RX + glutathione = an S-substituted glutathione + a halide anion + H(+). The catalysed reaction is prostaglandin A2 + glutathione = prostaglandin A2-S-(R)-glutathione. It carries out the reaction prostaglandin J2 + glutathione = prostaglandin J2-S-(R)-glutathione. The enzyme catalyses prostaglandin J2 + glutathione = prostaglandin J2-S-(S)-glutathione. It catalyses the reaction prostaglandin A2 + glutathione = prostaglandin A2-S-(S)-glutathione. The catalysed reaction is 11(S)-hydroxy-14(S),15(S)-epoxy-(5Z,8Z,12E)-eicosatrienoate + glutathione = (11S,15S)-dihydroxy-14(R)-S-glutathionyl-(5Z,8Z,12E)-eicosatrienoate. In terms of biological role, conjugation of reduced glutathione to a wide number of exogenous and endogenous hydrophobic electrophiles. Involved in the formation of glutathione conjugates of both prostaglandin A2 (PGA2) and prostaglandin J2 (PGJ2). Participates in the formation of novel hepoxilin regioisomers. The sequence is that of Glutathione S-transferase Mu 1 from Mus musculus (Mouse).